Here is a 297-residue protein sequence, read N- to C-terminus: Syntaxin-4 (297 aa).

Positions 1–12 (MRDRTHELRQGD) are enriched in basic and acidic residues. Positions 1 to 21 (MRDRTHELRQGDDSSDEEDKE) are disordered. Residues 1–275 (MRDRTHELRQ…QKKARKKKVL (275 aa)) are Cytoplasmic-facing. Residues Ser-14 and Ser-15 each carry the phosphoserine modification. Thr-31 is subject to Phosphothreonine. Ser-36, Ser-117, Ser-208, and Ser-248 each carry phosphoserine. Positions 43–163 (HKVRTIRQTI…ERIRRQLKIT (121 aa)) form a coiled coil. An interaction with CENPF region spans residues 154–297 (ERIRRQLKIT…AVIIGVTVVG (144 aa)). Residues 200 to 262 (LNEISARHSE…ERGQEHVKTA (63 aa)) enclose the t-SNARE coiled-coil homology domain. A helical; Anchor for type IV membrane protein transmembrane segment spans residues 276 to 296 (IAICVSITVVLLAVIIGVTVV). Position 297 (Gly-297) is a topological domain, extracellular.

It belongs to the syntaxin family. In terms of assembly, component of the SNARE complex composed of STX4, SNAP23 and VAMP7 that interacts with SYT7 during lysosomal exocytosis. Found in a complex with VAMP8 and SNAP23. Detected in a complex with SNAP23 and STXBP4. Interacts with VAMP2. Interacts with SNAP23 and SNAPIN. Interacts with LLGL1. Interacts (via C-terminus) with CENPF. Interacts with DOC2B. Interacts with STXBP6. Interacts with STXBP3; excludes interaction with DOC2B and SNAP25. Interacts with STXBP4; excludes interaction with VAMP2. Interacts with STXBP5L. As to expression, expressed in neutrophils and neutrophil-differentiated HL-60 cells. Expression in neutrophils increases with differentiation.

It is found in the cell membrane. The protein resides in the cell projection. It localises to the neuron projection. Its subcellular location is the stereocilium. Functionally, plasma membrane t-SNARE that mediates docking of transport vesicles. Necessary for the translocation of SLC2A4 from intracellular vesicles to the plasma membrane. In neurons, recruited at neurite tips to membrane domains rich in the phospholipid 1-oleoyl-2-palmitoyl-PC (OPPC) which promotes neurite tip surface expression of the dopamine transporter SLC6A3/DAT by facilitating fusion of SLC6A3-containing transport vesicles with the plasma membrane. Together with STXB3 and VAMP2, may also play a role in docking/fusion of intracellular GLUT4-containing vesicles with the cell surface in adipocytes and in docking of synaptic vesicles at presynaptic active zones. Required for normal hearing. The protein is Syntaxin-4 (STX4) of Homo sapiens (Human).